The chain runs to 185 residues: MIEETLLEAEEKMEKAVVVAKEDFAAIRTGRAHPAMFNKIVAEYYGAPTPINQLASFSVPEPRMAVVTPFDKTALRNIEQAIRDSDLGVNPSNDGNIIRVTFPELTEERRREYIKVAKAKGEDAKVSIRSVRRKAKDSIDKMVKDGEVGEDEGRRAEKELDDTTAKYVAQVDELLKHKEAELLEV.

The disordered stretch occupies residues 137–162 (DSIDKMVKDGEVGEDEGRRAEKELDD).

The protein belongs to the RRF family.

It localises to the cytoplasm. In terms of biological role, responsible for the release of ribosomes from messenger RNA at the termination of protein biosynthesis. May increase the efficiency of translation by recycling ribosomes from one round of translation to another. The polypeptide is Ribosome-recycling factor (Streptomyces coelicolor (strain ATCC BAA-471 / A3(2) / M145)).